The primary structure comprises 123 residues: Small ribosomal subunit protein bS6 (123 aa).

The disordered stretch occupies residues 102–123 (MLKQKEERAPRREAEAKEFAAE). The segment covering 104 to 123 (KQKEERAPRREAEAKEFAAE) has biased composition (basic and acidic residues).

The protein belongs to the bacterial ribosomal protein bS6 family.

Binds together with bS18 to 16S ribosomal RNA. The polypeptide is Small ribosomal subunit protein bS6 (Vibrio vulnificus (strain CMCP6)).